The primary structure comprises 152 residues: MTFTDLVIILFILALLAYAVYDQFIMPRRNGPVLLAIPLLRRSRVDGLIFVGLTAILIYNNITQHGTPITTWLLSALALMGLYLFWIRTPKIIFKPRGFFFANVWIEYQRIKEMNLSEDGVLVMQLEQRRLLIRVRNIDDLEKIYKLLVSTQ.

3 consecutive transmembrane segments (helical) span residues 6–26 (LVII…QFIM), 45–65 (VDGL…ITQH), and 67–87 (TPIT…LFWI).

This sequence belongs to the UPF0266 family.

It is found in the cell inner membrane. This chain is UPF0266 membrane protein KPK_1957, found in Klebsiella pneumoniae (strain 342).